A 129-amino-acid chain; its full sequence is D-ribose pyranase 2 (129 aa).

His20 functions as the Proton donor in the catalytic mechanism. Substrate is bound by residues Asp28, His96, and 118 to 120; that span reads YAN.

It belongs to the RbsD / FucU family. RbsD subfamily. In terms of assembly, homodecamer.

It is found in the cytoplasm. The catalysed reaction is beta-D-ribopyranose = beta-D-ribofuranose. The protein operates within carbohydrate metabolism; D-ribose degradation; D-ribose 5-phosphate from beta-D-ribopyranose: step 1/2. In terms of biological role, catalyzes the interconversion of beta-pyran and beta-furan forms of D-ribose. The chain is D-ribose pyranase 2 from Streptomyces griseus subsp. griseus (strain JCM 4626 / CBS 651.72 / NBRC 13350 / KCC S-0626 / ISP 5235).